A 536-amino-acid polypeptide reads, in one-letter code: MSDYENDDECWSTLESFRVKLISVIDPSRITPYLRQCKVLNPDDEEQVLSDPNLVIRKRKVGVLLDILQRTGHKGYVAFLESLELYYPQLYRKVTGKEPARVFSMIIDASGESGLTQLLMTEVMKLQKKVQDLTALLSSKDDFIKELRVKDSLLRKHQERVQRLKEECELSSAELKRCKDENYELAMCLAHLSEEKGAALMRNRDLQLEVDRLRHSLMKAEDDCKVERKHTLKLRHAMEQRPSQELLWELQQEKDLLQARVQELQVSVQEGKLDRNSPYIQVLEEDWRQALQEHQKQVSTIFSLRKDLRQAETLRARCTEEKEMFELQCLALRKDAKMYKDRIEAILLQMEEVSIERDQAMASREELHAQCTQSFQDKDKLRKLVRELGEKADELQLQLFQTESRLLAAEGRLKQQQLDMLILSSDLEDSSPRNSQELSLPQDLEEDAQLSDKGVLADRESPEQPFMALNKEHLSLTHGMGPSSSEPPEKERRRLKESFENYRRKRALRKMQNSWRQGEGDRGNTTGSDNTDTEGS.

Serine 2 carries the post-translational modification Phosphoserine. Positions 3, 10, and 73 each coordinate Zn(2+). One can recognise a CARD domain in the interval 6–98 (NDDECWSTLE…QLYRKVTGKE (93 aa)). The segment at 99-116 (PARVFSMIIDASGESGLT) is linker. The stretch at 117–272 (QLLMTEVMKL…ELQVSVQEGK (156 aa)) forms a coiled coil. Residue lysine 125 forms a Glycyl lysine isopeptide (Lys-Gly) (interchain with G-Cter in ubiquitin) linkage. At threonine 231 the chain carries Phosphothreonine; by PKC/PRKCD. At serine 277 the chain carries Phosphoserine. Residues 303–415 (SLRKDLRQAE…LLAAEGRLKQ (113 aa)) adopt a coiled-coil conformation. A phosphoserine mark is found at serine 424, serine 425, serine 431, serine 451, serine 461, serine 483, and serine 498. Residues 425-451 (SDLEDSSPRNSQELSLPQDLEEDAQLS) are disordered. Residues 476-536 (LTHGMGPSSS…GSDNTDTEGS (61 aa)) form a disordered region. The segment covering 487 to 502 (PPEKERRRLKESFENY) has biased composition (basic and acidic residues). A phosphothreonine; by CK2 mark is found at threonine 531 and threonine 533.

Monomer. Homodimer; homodimerization is mediated by the CARD domain which forms an extensive interaction with the adjacent linker and coiled-coil regions; leads to an autoinhibited state. Homomultimer; polymerizes following activation, forming a nucleating helical template that seeds BCL10-filament formation via a CARD-CARD interaction. Interacts (via CARD domain) with BCL10 (via CARD domain); interaction takes place following CARD9 activation and polymerization, leading to the formation of a filamentous CBM complex assembly. Component of a CBM complex (CARD9-BCL10, MALT1), composed of CARD9, BCL10 and MALT1. Interacts with RASGRF1. Interacts with NOD2 (via NACHT domain); interaction is direct. Interacts with RIPK2. Interacts with VHL; without leading to protein degradation. Phosphorylated at Thr-231 by PRKCD downstream of C-type lectin receptors activation: phosphorylation promotes interaction with BCL10, followed by activation of NF-kappa-B and MAP kinase p38 pathways. Phosphorylated at Thr-531 and Thr-531 by CK2 following interaction with VHL, leading to inhibit the ability to activate NF-kappa-B. In terms of processing, ubiquitinated at Lys-125 via 'Lys-27'-linked ubiquitin by TRIM62 downstream of C-type lectin receptors activation; leading to CARD9 activation, followed by activation of NF-kappa-B and MAP kinase p38 pathways. Deubiquitinated at Lys-125 by USP15, inhibiting CARD9. In terms of tissue distribution, specifically expressed in myeloid cells. Not expressed in non-lymphoid organs.

Its subcellular location is the cytoplasm. With respect to regulation, maintained in an autoinhibited state via homodimerization in which the CARD domain forms an extensive interaction with the adjacent linker and coiled-coil regions. Activation downstream of C-type lectin receptors, by phosphorylation by PRKCD and/or ubiquitination by TRIM62, triggers disruption of the CARD domain-coiled coil interface, CARD9 homooligomerization and BCL10 recruitment, followed by activation of NF-kappa-B and MAP kinase p38 pathways. Zinc-binding inhibits activation by stabilizing the CARD ground-state conformation and restricting its capacity to form BCL10-nucleating filaments. Its function is as follows. Adapter protein that plays a key role in innate immune response against fungi by forming signaling complexes downstream of C-type lectin receptors. CARD9-mediated signals are essential for antifungal immunity against a subset of fungi from the phylum Ascomycota. Transduces signals in myeloid cells downstream of C-type lectin receptors CLEC7A (dectin-1), CLEC6A (dectin-2) and CLEC4E (Mincle), which detect pathogen-associated molecular pattern metabolites (PAMPs), such as fungal carbohydrates, and trigger CARD9 activation. Upon activation, CARD9 homooligomerizes to form a nucleating helical template that recruits BCL10 via CARD-CARD interaction, thereby promoting polymerization of BCL10 and subsequent recruitment of MALT1: this leads to activation of NF-kappa-B and MAP kinase p38 (MAPK11, MAPK12, MAPK13 and/or MAPK14) pathways which stimulate expression of genes encoding pro-inflammatory cytokines and chemokines. CARD9 signaling in antigen-presenting cells links innate sensing of fungi to the activation of adaptive immunity and provides a cytokine milieu that induces the development and subsequent of interleukin 17-producing T helper (Th17) cells. Also involved in activation of myeloid cells via classical ITAM-associated receptors and TLR: required for TLR-mediated activation of MAPK, while it is not required for TLR-induced activation of NF-kappa-B. CARD9 can also be engaged independently of BCL10: forms a complex with RASGRF1 downstream of C-type lectin receptors, which recruits and activates HRAS, leading to ERK activation and the production of cytokines. Acts as an important regulator of the intestinal commensal fungi (mycobiota) component of the gut microbiota. Plays an essential role in antifungal immunity against dissemination of gut fungi: acts by promoting induction of antifungal IgG antibodies response in CX3CR1(+) macrophages to confer protection against disseminated C.albicans or C.auris infection. Also mediates immunity against other pathogens, such as certain bacteria, viruses and parasites; CARD9 signaling is however redundant with other innate immune responses. In response to L.monocytogenes infection, required for the production of inflammatory cytokines activated by intracellular peptidoglycan: acts by connecting NOD2 recognition of peptidoglycan to downstream activation of MAP kinases (MAPK) without activating NF-kappa-B. The sequence is that of Caspase recruitment domain-containing protein 9 from Mus musculus (Mouse).